We begin with the raw amino-acid sequence, 269 residues long: MVKISFQPAVAGIKADKADKAAASGPASASAPAAEILLTPAREERPPRHRSRKGGSVGGVCYLSMGMVVLLMGLVFASVYIYRYFFLAQLARDNFFHCGVLYEDSLSSQIRTRLELEEDVKIYLEENYERINVPVPQFGGGDPADIIHDFQRGLTAYHDISLDKCYVIELNTTIVLPPRNFWELLMNVKRGTYLPQTYIIQEEMVVTEHVRDKEALGSFIYHLCNGKDTYRLRRRSTRRRINKRGGKNCNAIRHFENTFVVETLICGVV.

Residue T39 is modified to Phosphothreonine. Residues 57–77 form a helical; Signal-anchor for type II membrane protein membrane-spanning segment; sequence VGGVCYLSMGMVVLLMGLVFA. The 95-residue stretch at 138-232 folds into the BRICHOS domain; sequence FGGGDPADII…LCNGKDTYRL (95 aa). C165 and C224 form a disulfide bridge. An N-linked (GlcNAc...) asparagine glycan is attached at N171.

This sequence belongs to the ITM2 family. In terms of assembly, interacts with BACE1. Interacts with APP. Interacts with STMN2. Type I membrane-bound, as well as soluble, furin has a pre-eminent role in ITM2C proteolytic processing. PCSK7 and PCSK5 may also be involved although to a lesser extent. The soluble form of PCSK7 is incapable of processing ITM2C. Fails to undergo shedding by ADAM10 and intramembrane cleavage by SPPL2B.

The protein localises to the lysosome membrane. The protein resides in the cell membrane. Functionally, negative regulator of amyloid-beta peptide production. May inhibit the processing of APP by blocking its access to alpha- and beta-secretase. Binding to the beta-secretase-cleaved APP C-terminal fragment is negligible, suggesting that ITM2C is a poor gamma-secretase cleavage inhibitor. May play a role in TNF-induced cell death and neuronal differentiation. The polypeptide is Integral membrane protein 2C (Itm2c) (Mus musculus (Mouse)).